Reading from the N-terminus, the 116-residue chain is Nucleoid-associated protein A9601_00191 (116 aa).

Belongs to the YbaB/EbfC family. Homodimer.

The protein resides in the cytoplasm. It is found in the nucleoid. Functionally, binds to DNA and alters its conformation. May be involved in regulation of gene expression, nucleoid organization and DNA protection. The polypeptide is Nucleoid-associated protein A9601_00191 (Prochlorococcus marinus (strain AS9601)).